We begin with the raw amino-acid sequence, 291 residues long: Elongation factor Ts (291 aa).

The interval threonine 79–valine 82 is involved in Mg(2+) ion dislocation from EF-Tu.

It belongs to the EF-Ts family.

It localises to the cytoplasm. In terms of biological role, associates with the EF-Tu.GDP complex and induces the exchange of GDP to GTP. It remains bound to the aminoacyl-tRNA.EF-Tu.GTP complex up to the GTP hydrolysis stage on the ribosome. This Leuconostoc mesenteroides subsp. mesenteroides (strain ATCC 8293 / DSM 20343 / BCRC 11652 / CCM 1803 / JCM 6124 / NCDO 523 / NBRC 100496 / NCIMB 8023 / NCTC 12954 / NRRL B-1118 / 37Y) protein is Elongation factor Ts.